The primary structure comprises 444 residues: Homogentisate 1,2-dioxygenase (444 aa).

The Proton acceptor role is filled by histidine 298. Positions 341 and 347 each coordinate Fe cation. Homogentisate is bound by residues tyrosine 356 and histidine 377. Fe cation is bound at residue histidine 377.

This sequence belongs to the homogentisate dioxygenase family. Hexamer; dimer of trimers. It depends on Fe cation as a cofactor.

It carries out the reaction homogentisate + O2 = 4-maleylacetoacetate + H(+). It functions in the pathway amino-acid degradation; L-phenylalanine degradation; acetoacetate and fumarate from L-phenylalanine: step 4/6. Involved in the catabolism of homogentisate (2,5-dihydroxyphenylacetate or 2,5-OH-PhAc), a central intermediate in the degradation of phenylalanine and tyrosine. Catalyzes the oxidative ring cleavage of the aromatic ring of homogentisate to yield maleylacetoacetate. In Burkholderia ambifaria (strain ATCC BAA-244 / DSM 16087 / CCUG 44356 / LMG 19182 / AMMD) (Burkholderia cepacia (strain AMMD)), this protein is Homogentisate 1,2-dioxygenase.